The sequence spans 434 residues: Maltoporin (434 aa).

An N-terminal signal peptide occupies residues 1-25 (MMTTLRKLPLALAIAAGVLTTQAMA).

Belongs to the porin LamB (TC 1.B.3) family. Homotrimer formed of three 18-stranded antiparallel beta-barrels, containing three independent channels.

Its subcellular location is the cell outer membrane. The catalysed reaction is beta-maltose(in) = beta-maltose(out). Functionally, involved in the transport of maltose and maltodextrins. The protein is Maltoporin of Serratia proteamaculans (strain 568).